A 158-amino-acid polypeptide reads, in one-letter code: Putative metalloproteinase inhibitor tag-225 (158 aa).

Positions 1–20 (MQNLSLSLVILSVLIAVTLA) are cleaved as a signal peptide. Cys21 is a binding site for Zn(2+). The tract at residues 21–25 (CKCRE) is involved in metalloproteinase-binding. Disulfide bonds link Cys21–Cys96, Cys23–Cys123, and Cys33–Cys158. The 138-residue stretch at 21-158 (CKCREQSTKE…LQSQVKSIKC (138 aa)) folds into the NTR domain. Asn79 carries N-linked (GlcNAc...) asparagine glycosylation. Positions 93–94 (AP) are involved in metalloproteinase-binding.

Belongs to the protease inhibitor I35 (TIMP) family.

It localises to the secreted. In terms of biological role, complexes with metalloproteinases and irreversibly inactivates them by binding to their catalytic zinc cofactor. In Caenorhabditis elegans, this protein is Putative metalloproteinase inhibitor tag-225 (tag-225).